The primary structure comprises 534 residues: N-acetylglutamate synthase, mitochondrial (534 aa).

Residues 1–18 constitute a mitochondrion transit peptide; it reads MATALMAVVLRAAAVAPR. The disordered stretch occupies residues 19–99; that stretch reads LRGRGGTGGA…HESPEPPSGR (81 aa). Residues 19–376 are amino-acid kinase domain (AAK); that stretch reads LRGRGGTGGA…SGTLFKNAER (358 aa). Positions 81–96 are enriched in pro residues; the sequence is VPSPRPPVPHESPEPP. The N-acetyltransferase domain occupies 375 to 526; it reads ERMLRVRSLD…HAKGLPDSFH (152 aa). Residues K401, K444, and 474–479 each bind substrate; that span reads RSRVTN.

It belongs to the acetyltransferase family. As to quaternary structure, homodimer. Homotetramer. Post-translationally, probably processed by mitochondrial processing peptidase (MPP). The long form has not yet been isolated. Highly expressed in the adult liver, kidney and small intestine. Weakly expressed in the fetal liver, lung, pancreas, placenta, heart and brain tissue.

The protein localises to the mitochondrion matrix. The catalysed reaction is L-glutamate + acetyl-CoA = N-acetyl-L-glutamate + CoA + H(+). Its pathway is amino-acid biosynthesis; L-arginine biosynthesis; N(2)-acetyl-L-ornithine from L-glutamate: step 1/4. Its activity is regulated as follows. Increased by L-arginine. Plays a role in the regulation of ureagenesis by producing the essential cofactor N-acetylglutamate (NAG), thus modulating carbamoylphosphate synthase I (CPS1) activity. In Homo sapiens (Human), this protein is N-acetylglutamate synthase, mitochondrial (NAGS).